A 198-amino-acid chain; its full sequence is Protein hunchback (198 aa).

Disordered stretches follow at residues 16 to 111 (SHHH…LPGL) and 152 to 198 (NDKL…KYMA). Over residues 17-31 (HHHHHHHAHHSHHQH) the composition is skewed to basic residues. 2 stretches are compositionally biased toward low complexity: residues 35 to 46 (SNSNSNASSPHQ) and 56 to 83 (SNTNLQLEQYLKQQQQQQQQQQQQQQQQ). Positions 95–105 (PSPSNNDQNSP) are enriched in polar residues. Positions 179 to 198 (EPEKEHDLMSNSSEDMKYMA) are enriched in basic and acidic residues.

It belongs to the hunchback C2H2-type zinc-finger protein family.

It localises to the nucleus. Gap class segmentation protein that controls development of head structures. This is Protein hunchback (hb) from Drosophila lineosetae (Fruit fly).